A 270-amino-acid polypeptide reads, in one-letter code: Diaminopimelate epimerase (270 aa).

Residues Asn15, Gln49, and Asn66 each coordinate substrate. The active-site Proton donor is Cys75. Substrate is bound by residues 76-77 (GN), Asn155, Asn187, and 204-205 (ER). Residue Cys213 is the Proton acceptor of the active site. Position 214–215 (214–215 (GS)) interacts with substrate.

The protein belongs to the diaminopimelate epimerase family. As to quaternary structure, homodimer.

It localises to the cytoplasm. It carries out the reaction (2S,6S)-2,6-diaminopimelate = meso-2,6-diaminopimelate. It functions in the pathway amino-acid biosynthesis; L-lysine biosynthesis via DAP pathway; DL-2,6-diaminopimelate from LL-2,6-diaminopimelate: step 1/1. In terms of biological role, catalyzes the stereoinversion of LL-2,6-diaminopimelate (L,L-DAP) to meso-diaminopimelate (meso-DAP), a precursor of L-lysine and an essential component of the bacterial peptidoglycan. The polypeptide is Diaminopimelate epimerase (Rickettsia conorii (strain ATCC VR-613 / Malish 7)).